The primary structure comprises 375 residues: POU domain, class 3, transcription factor 1-A (375 aa).

Disordered stretches follow at residues 1 to 29 (MAATAQYLPRNNSLPSNPLMHPDSDRMHQ), 67 to 138 (PASD…HQPL), and 151 to 200 (MLGP…PSSD). Composition is skewed to polar residues over residues 107–117 (VHQQSPSSHAW), 129–138 (SPSSNSHQPL), and 151–160 (MLGPQASSLH). Over residues 162 to 177 (SMRDPLHDDPGVHDTQ) the composition is skewed to basic and acidic residues. One can recognise a POU-specific domain in the interval 194 to 268 (EDAPSSDDLE…LLNKWLEETD (75 aa)). Residues 286–345 (KRKKRTSIEVGVKGALENHFLKCPKPSAHEITSLADSLQLEKEVVRVWFCNRRQKEKRMT) constitute a DNA-binding region (homeobox).

The protein belongs to the POU transcription factor family. Class-3 subfamily. In embryos at the neural fold stage, localized primarily in the anterior neural plate, and localized mostly in the anterior region of the nerve cord of neurula stage embryos. In tailbud stages, expressed predominantly in the eye and brain, with weak expression along the length of the nerve cord. In adults, expressed in skin and brain.

It is found in the nucleus. Acts as a transcription factor. May play a role in neuronal differentiation. The protein is POU domain, class 3, transcription factor 1-A (pou3f1-a) of Xenopus laevis (African clawed frog).